The following is an 824-amino-acid chain: Frameshifted structural polyprotein (824 aa).

Polar residues predominate over residues 1 to 10 (MEFIPTQTFY). The interval 1–104 (MEFIPTQTFY…KKKKPGRRER (104 aa)) is disordered. A compositionally biased stretch (low complexity) spans 22 to 44 (RPTIQVIRPRPRPQRQAGQLAQL). Residues 36 to 68 (RQAGQLAQLISAVNKLTMRAVPQQKPRKNRKNK) form a host transcription inhibition region. Residues 60-72 (KPRKNRKNKKQKQ) show a composition bias toward basic residues. The short motif at 61–99 (PRKNRKNKKQKQKQQAPQNNTNQKKQPPKKKPAQKKKKP) is the Nuclear localization signal element. The span at 73-85 (KQQAPQNNTNQKK) shows a compositional bias: low complexity. The binding to the viral RNA stretch occupies residues 84–114 (KKQPPKKKPAQKKKKPGRRERMCMKIENDCI). Residues 86-101 (QPPKKKPAQKKKKPGR) show a composition bias toward basic residues. 2 ribosome-binding regions span residues 91 to 100 (KPAQKKKKPG) and 99 to 113 (PGRR…ENDC). Cys-113 and Cys-128 are oxidised to a cystine. The 149-residue stretch at 113–261 (CIFEVKHEGK…KITPEGAEEW (149 aa)) folds into the Peptidase S3 domain. His-139 serves as the catalytic Charge relay system. The Nuclear export signal motif lies at 144–154 (IDNADLAKLAF). Asp-161 acts as the Charge relay system in catalysis. Residues 183-193 (PEGYYNWHHGA) are dimerization of the capsid protein. The Charge relay system role is filled by Ser-213. The tract at residues 219 to 223 (DNKGR) is dimerization of the capsid protein. A functions as an uncleaved signal peptide for the precursor of protein E3/E2 region spans residues 262–274 (SLAIPVMCLLANT). Residues 262–692 (SLAIPVMCLL…YYYELYPTMT (431 aa)) are Extracellular-facing. N-linked (GlcNAc...) asparagine; by host glycosylation is found at Asn-273, Asn-588, and Asn-670. The helical transmembrane segment at 693 to 713 (VVVVSVASFILLSMVGMAVGM) threads the bilayer. Residues 714 to 748 (CMCARRRCITPYELTPGATVPFLLSLICCIRTAKA) lie on the Cytoplasmic side of the membrane. S-palmitoyl cysteine; by host attachment occurs at residues Cys-721, Cys-741, and Cys-742. Residues 721–741 (CITPYELTPGATVPFLLSLIC) are transient transmembrane before p62-6K protein processing. Residues 749 to 763 (ATYQEAAVYLWNEQQ) are Extracellular-facing. A helical transmembrane segment spans residues 764-784 (PLFWLQALIPLAALIVLCNCL). The Cytoplasmic portion of the chain corresponds to 785 to 795 (RLLPCCCKTLA).

Belongs to the alphavirus frameshifted structural polyprotein family. Homodimer. Homomultimer. Interacts with host karyopherin KPNA4; this interaction allows the nuclear import of the viral capsid protein. Interacts with spike glycoprotein E2. Interacts with host IRAK1; the interaction leads to inhibition of IRAK1-dependent signaling. In terms of assembly, the precursor of protein E3/E2 and E1 form a heterodimer shortly after synthesis. As to quaternary structure, processing of the precursor of protein E3/E2 into E2 and E3 results in a heterodimer of the spike glycoproteins E2 and E1. Spike at virion surface are constituted of three E2-E1 heterodimers. Interacts with 6K protein. Interacts with host MXRA8; this interaction mediates virus entry. Post-translationally, specific enzymatic cleavages in vivo yield mature proteins. Capsid protein is auto-cleaved during polyprotein translation, unmasking a signal peptide at the N-terminus of the precursor of E3/E2. The remaining polyprotein is then targeted to the host endoplasmic reticulum, where host signal peptidase cleaves it into pE2 and TF. pE2 is further processed to mature E3 and E2 by host furin in trans-Golgi vesicle. Palmitoylated via thioester bonds. These palmitoylations may induce disruption of the C-terminus transmembrane. This would result in the reorientation of E2 C-terminus from lumenal to cytoplasmic side. In terms of processing, palmitoylated via thioester bonds.

It is found in the virion. The protein resides in the host cytoplasm. Its subcellular location is the host cell membrane. The protein localises to the host nucleus. It localises to the virion membrane. It carries out the reaction Autocatalytic release of the core protein from the N-terminus of the togavirus structural polyprotein by hydrolysis of a -Trp-|-Ser- bond.. Forms an icosahedral capsid with a T=4 symmetry composed of 240 copies of the capsid protein surrounded by a lipid membrane through which penetrate 80 spikes composed of trimers of E1-E2 heterodimers. The capsid protein binds to the viral RNA genome at a site adjacent to a ribosome binding site for viral genome translation following genome release. Possesses a protease activity that results in its autocatalytic cleavage from the nascent structural protein. Following its self-cleavage, the capsid protein transiently associates with ribosomes, and within several minutes the protein binds to viral RNA and rapidly assembles into icosahedric core particles. The resulting nucleocapsid eventually associates with the cytoplasmic domain of the spike glycoprotein E2 at the cell membrane, leading to budding and formation of mature virions. In case of infection, new virions attach to target cells and after clathrin-mediated endocytosis their membrane fuses with the host endosomal membrane. This leads to the release of the nucleocapsid into the cytoplasm, followed by an uncoating event necessary for the genomic RNA to become accessible. The uncoating might be triggered by the interaction of capsid proteins with ribosomes. Binding of ribosomes would release the genomic RNA since the same region is genomic RNA-binding and ribosome-binding. Specifically inhibits interleukin-1 receptor-associated kinase 1/IRAK1-dependent signaling during viral entry, representing a means by which the alphaviruses may evade innate immune detection and activation prior to viral gene expression. Its function is as follows. Provides the signal sequence for the translocation of the precursor of protein E3/E2 to the host endoplasmic reticulum. Furin-cleaved E3 remains associated with spike glycoprotein E1 and mediates pH protection of the latter during the transport via the secretory pathway. After virion release from the host cell, the assembly protein E3 is gradually released in the extracellular space. Functionally, plays a role in viral attachment to target host cell, by binding to the cell receptor. Synthesized as a p62 precursor which is processed by furin at the cell membrane just before virion budding, giving rise to E2-E1 heterodimer. The p62-E1 heterodimer is stable, whereas E2-E1 is unstable and dissociate at low pH. p62 is processed at the last step, presumably to avoid E1 fusion activation before its final export to cell surface. E2 C-terminus contains a transitory transmembrane that would be disrupted by palmitoylation, resulting in reorientation of the C-terminal tail from lumenal to cytoplasmic side. This step is critical since E2 C-terminus is involved in budding by interacting with capsid proteins. This release of E2 C-terminus in cytoplasm occurs lately in protein export, and precludes premature assembly of particles at the endoplasmic reticulum membrane. In terms of biological role, plays a role in viral assembly and release. This chain is Frameshifted structural polyprotein, found in Aedes aegypti (Yellowfever mosquito).